The following is a 182-amino-acid chain: Avenin-E (182 aa).

A 1; approximate repeat occupies 21–26 (PFVQQQ). Positions 21–41 (PFVQQQPFVQQQQQPFVQQQQ) are 3 X 7 AA tandem repeats of P-F-V-Q-Q-Q-Q. Residues 27–34 (PFVQQQQQ) form a 2; approximate repeat. Repeat unit 3 spans residues 35–41 (PFVQQQQ).

The protein belongs to the gliadin/glutenin family. As to quaternary structure, monomer.

It is found in the vacuole. Its subcellular location is the aleurone grain. Its function is as follows. Seed storage protein. Serves as a source of nitrogen, carbon, and sulfur for the young developing seedling. This is Avenin-E from Avena sativa (Oat).